A 1171-amino-acid chain; its full sequence is ATP-dependent helicase/deoxyribonuclease subunit B (1171 aa).

One can recognise a UvrD-like helicase ATP-binding domain in the interval methionine 1–alanine 390. Glycine 8–serine 15 contacts ATP. The region spanning methionine 281 to aspartate 587 is the UvrD-like helicase C-terminal domain. The [4Fe-4S] cluster site is built by cysteine 805, cysteine 1129, cysteine 1132, and cysteine 1138.

This sequence belongs to the helicase family. AddB/RexB type 1 subfamily. Heterodimer of AddA and AddB. The cofactor is Mg(2+). It depends on [4Fe-4S] cluster as a cofactor.

Functionally, the heterodimer acts as both an ATP-dependent DNA helicase and an ATP-dependent, dual-direction single-stranded exonuclease. Recognizes the chi site generating a DNA molecule suitable for the initiation of homologous recombination. The AddB subunit has 5' -&gt; 3' nuclease activity but not helicase activity. The polypeptide is ATP-dependent helicase/deoxyribonuclease subunit B (Bacillus cereus (strain ATCC 10987 / NRS 248)).